Consider the following 248-residue polypeptide: MGRKFVVGGNWKMNGDKNQINEIVNNLKKGPLDPNVEVIVGVPAIYLSYVKTIIPDNVEVAAQNCWKSPKGAFTGEISPAMIKDVGVNWVILGHSERRTIFGEKDELVAEKVAHALESGLKVIACIGETLEERESGKTEEVVFRQLKALVSAIGDKWENIVLAYEPVWAIGTGKTATPQQAQDVHHALRNWLSANVSGSVSDAVRIQYGGSVTAANAKELASCKDIDGFLVGGASLKPEFVEIVNANQ.

Residue lysine 12 participates in substrate binding. Histidine 94 acts as the Electrophile in catalysis. Glutamate 165 serves as the catalytic Proton acceptor.

Belongs to the triosephosphate isomerase family. Homodimer.

The catalysed reaction is D-glyceraldehyde 3-phosphate = dihydroxyacetone phosphate. It functions in the pathway carbohydrate biosynthesis; gluconeogenesis. It participates in carbohydrate degradation; glycolysis; D-glyceraldehyde 3-phosphate from glycerone phosphate: step 1/1. The chain is Triosephosphate isomerase (Tpi) from Bombyx mori (Silk moth).